Consider the following 34-residue polypeptide: Phallacidin proprotein 1 (34 aa).

Residues 1-10 (MSDINATRLP) constitute a propeptide that is removed on maturation. Positions 11 to 17 (AWLVDCP) form a cross-link, cyclopeptide (Ala-Pro). Positions 12 to 16 (WLVDC) form a cross-link, 2'-cysteinyl-6'-hydroxytryptophan sulfoxide (Trp-Cys). Positions 18-34 (CVGDDVNRLLTRGESLC) are excised as a propeptide.

The protein belongs to the MSDIN fungal toxin family. Processed by the macrocyclase-peptidase enzyme POPB to yield a toxic cyclic heptapeptide. POPB first removes 10 residues from the N-terminus. Conformational trapping of the remaining peptide forces the enzyme to release this intermediate rather than proceed to macrocyclization. The enzyme rebinds the remaining peptide in a different conformation and catalyzes macrocyclization of the N-terminal 7 residues.

In terms of biological role, major toxin that belongs to the bicyclic heptapeptides called phallotoxins. Although structurally related to amatoxins, phallotoxins have a different mode of action, which is the stabilization of F-actin. Phallotoxins are poisonous when administered parenterally, but not orally because of poor absorption. In Amanita bisporigera (Destroying angel), this protein is Phallacidin proprotein 1.